Here is a 1371-residue protein sequence, read N- to C-terminus: MAERANLVFHNKVIDGTAIKRLISRLIDHFGMAYTSHILDQVKTLGFQQATATSISLGIDDLLTIPSKGWLVQDAEQQSLILEKHHHYGNVHAVEKLRQSIEIWYATSEYLRQEMNLNFRMTDPFNPVHMMSFSGARGNASQVHQLVGMRGLMSDPQGQMIDLPIQSNLREGLSLTEYIISCYGARKGVVDTAVRTSDAGYLTRRLVEVVQHIVVRRTDCGTIRGISVSPRNKNRMMSERIFIQTLIGRVLADDIYIGSRCVAFRNQDLGIGLVNRFITFGTQSISIRTPFTCRSTSWICRLCYGRSPTHGDLVELGEAVGIIAGQSIGEPGTQLTLRTFHTGGVFTGGTAEHVRAPYNGKIKFNEDLVHPTRTRHGHPAFLCYIDLSVIIESEDIIHSVTIPPKSFLLVQNDQYVESEQVIAEIREGTYTFHFKERVRKYIYSDSEGEMHWSTDVSHAPEFTYSNVHLLPKTSHLWILSGSSCESSLIRFSIHKDQDQMNIPFFFVKSKAISSLSVNNDQVSQKFFSSDFSDKKKSGIPNYSELNEIVGTSHYNFIYSAIFHENSDLLAKRRRNRFLIPFQSIQEQEKEFIPHSGISIEIPINGIFRRNSIFAFFDDPRYRRKSCGILKYGTLKADSIIQKEDMIEYRGVQKFKTKYEMKVDRFFFIPEEVHILPESSAIMVQNYSIIGVDTRITLNIRSQVGGLIRVERKKKRIELKIFSGDIHFPDKTDKISRHSGILIPPGRGKTNSKEFKKLKNWIYVQRITPTKKKFFVLVRPVATYEIADSINLATLFPQDLFREKDNIQLRVFNYILYGNGKPTRGISDTSIQLVRTCLVLNWDQDNKNSSLEEVRSFFVEVSTKGLIRDFIRIGLVKSHISYIRKRQNPADSGLISADHMNPFYSISPKAGILQQSLRQNHGTIRMFLNRNKESQSLLILSSSNCFRIGPFNHVKYHNVINQSIKKNPIITIKNSSGPLGTAIQISNFYSFLPLLTYNQISVIKYLQLDNLKYIFQVINSYLIDENGRILNPDPYSNVVLNPFKLNWYFLHQNYHHNYCEETSTIISLGQFFCENVCIAKKEPHLKSGQVLIVERDSVVIRSAKPYLATPGAKVHGHYREILYEGDTLVTFIYEKSRSGDITQGLPKVEQVLEVRSIDSISLNLEKRIKGWNKCITRILGIPWGFLIGAELTIVQSRISLVNKIQKVYRSQGVQIHNRHIEIIVRQITSKVLVSEEGMSNVFLPGELIGLLQAERTGRALEEAICYRAILLGITRASLNTQSFISEASFQETARVLAKAALRGRIDWLKGLKENVVLGGVIPAGTGFNKGLVHCSRQHTNILLEKKTKNFSLFEGNMRDILFYHREFFDSSI.

Zn(2+) contacts are provided by Cys220, Cys293, Cys300, and Cys303.

It belongs to the RNA polymerase beta' chain family. RpoC2 subfamily. As to quaternary structure, in plastids the minimal PEP RNA polymerase catalytic core is composed of four subunits: alpha, beta, beta', and beta''. When a (nuclear-encoded) sigma factor is associated with the core the holoenzyme is formed, which can initiate transcription. It depends on Zn(2+) as a cofactor.

It is found in the plastid. Its subcellular location is the chloroplast. The enzyme catalyses RNA(n) + a ribonucleoside 5'-triphosphate = RNA(n+1) + diphosphate. Functionally, DNA-dependent RNA polymerase catalyzes the transcription of DNA into RNA using the four ribonucleoside triphosphates as substrates. This is DNA-directed RNA polymerase subunit beta'' from Lobularia maritima (Sweet alyssum).